The chain runs to 259 residues: Small ribosomal subunit protein eS1 (259 aa).

Disordered regions lie at residues 1 to 23 (MAVG…KTAD) and 235 to 259 (ESKS…VDSV). The span at 8 to 19 (KVTKGGKKGGKK) shows a compositional bias: basic residues. Positions 246–259 (SRPDHYEPPKVDSV) are enriched in basic and acidic residues.

The protein belongs to the eukaryotic ribosomal protein eS1 family. In terms of assembly, component of the small ribosomal subunit. Mature ribosomes consist of a small (40S) and a large (60S) subunit. The 40S subunit contains about 33 different proteins and 1 molecule of RNA (18S). The 60S subunit contains about 49 different proteins and 3 molecules of RNA (28S, 5.8S and 5S).

It localises to the cytoplasm. This Schistosoma japonicum (Blood fluke) protein is Small ribosomal subunit protein eS1.